Reading from the N-terminus, the 100-residue chain is MTERFQSRLADVIRRPLITEKATRALELNQYTFEVDHRAAKPDIKAAIEQLFDVKVTGISTMNPPRRSRRMGRFAGKRAQVKKAVVRLAEGNSIQLFPES.

This sequence belongs to the universal ribosomal protein uL23 family. In terms of assembly, part of the 50S ribosomal subunit. Contacts protein L29, and trigger factor when it is bound to the ribosome.

Functionally, one of the early assembly proteins it binds 23S rRNA. One of the proteins that surrounds the polypeptide exit tunnel on the outside of the ribosome. Forms the main docking site for trigger factor binding to the ribosome. The polypeptide is Large ribosomal subunit protein uL23 (Synechococcus sp. (strain CC9902)).